Consider the following 541-residue polypeptide: Chaperonin GroEL 2 (541 aa).

ATP-binding positions include threonine 29 to proline 32, aspartate 86 to threonine 90, glycine 413, and aspartate 492.

Belongs to the chaperonin (HSP60) family. In terms of assembly, forms a cylinder of 14 subunits composed of two heptameric rings stacked back-to-back. Interacts with the co-chaperonin GroES.

It is found in the cytoplasm. It catalyses the reaction ATP + H2O + a folded polypeptide = ADP + phosphate + an unfolded polypeptide.. Its function is as follows. Together with its co-chaperonin GroES, plays an essential role in assisting protein folding. The GroEL-GroES system forms a nano-cage that allows encapsulation of the non-native substrate proteins and provides a physical environment optimized to promote and accelerate protein folding. The polypeptide is Chaperonin GroEL 2 (Nocardia farcinica (strain IFM 10152)).